Reading from the N-terminus, the 575-residue chain is MSSDEEKYSLPVVQNDSSRGSSVSSNLQEEYEELLHYAIVTPNIEPCASQSSHPKGELVPDVRISTIHDILHSQGNNSEVRETAIEVGKGCDFHISSHSKTDESSPVLSPRKPSHPVMDFFSSHLLADSSSPATNSSHTDAHEILVSDFLVSDENLQKMENVLDLWSSGLKTNIISELSKWRLNFIDWHRMEMRKEKEKHAAHLKQLCNQINELKELQKTFEISIGRKDEVISSLSHAIGKQKEKIELMRTFFHWRIGHVRARQDVYEGKLADQYYQRTLLKKVWKVWRSVVQKQWKDVVERACQARAEEVCIQISNDYEAKVAMLSGALENAKAEIQRMQHEKEHFEDSMKKAFMRGVCALNLEAMTIFQNRNDAGIDSTNNKKEEYGPGVQGKEHSAHLDPSAPPMPLPVTSPLLPSPPAAVGGASATAVPSAASMTSTRAASASSVHVPVSALGAGSAATAASEEMYVPRVVTSAQQKAGRTITARITGRCDFASKNRISSSLAIMGVSPPMSSVVVEKHHPVTVQTIPQATAAKYPRTIHPESSTSASRSLGTRSAHTQSLTSVHSIKVVD.

The tract at residues 1–26 is disordered; it reads MSSDEEKYSLPVVQNDSSRGSSVSSN. A phosphoserine mark is found at S105 and S109. One copy of the Centrin-binding (CBR) 1 repeat lies at 142–173; the sequence is HEILVSDFLVSDENLQKMENVLDLWSSGLKTN. Residues 191–222 are a coiled coil; that stretch reads MEMRKEKEKHAAHLKQLCNQINELKELQKTFE. Centrin-binding (CBR) repeat units lie at residues 231 to 262 and 263 to 295; these read VISSLSHAIGKQKEKIELMRTFFHWRIGHVRA and RQDVYEGKLADQYYQRTLLKKVWKVWRSVVQKQ. A coiled-coil region spans residues 316-355; the sequence is SNDYEAKVAMLSGALENAKAEIQRMQHEKEHFEDSMKKAF. Disordered stretches follow at residues 376-411 and 538-575; these read AGIDSTNNKKEEYGPGVQGKEHSAHLDPSAPPMPLP and KYPRTIHPESSTSASRSLGTRSAHTQSLTSVHSIKVVD. Residues 382 to 400 are compositionally biased toward basic and acidic residues; the sequence is NNKKEEYGPGVQGKEHSAH. K538 carries the N6-acetyllysine modification. The span at 545–569 shows a compositional bias: polar residues; that stretch reads PESSTSASRSLGTRSAHTQSLTSVH. Phosphoserine is present on S564.

Belongs to the POC5 family. In terms of assembly, interacts with CETN2 and CETN3. Forms a microtubule-associated complex with POC1B, CETN2 and FAM161A. Interacts with CCDC15. Hyperphosphorylated during recruitment to procentrioles in G2/M phase.

It localises to the cytoplasm. The protein localises to the cytoskeleton. The protein resides in the microtubule organizing center. It is found in the centrosome. Its subcellular location is the centriole. Essential for the assembly of the distal half of centrioles, required for centriole elongation. Acts as a negative regulator of centriole elongation. The protein is Centrosomal protein POC5 (POC5) of Homo sapiens (Human).